The sequence spans 146 residues: Large ribosomal subunit protein uL15 (146 aa).

Residues 1–13 show a composition bias toward basic and acidic residues; that stretch reads MKLHELKPAEGSR. A disordered region spans residues 1–48; that stretch reads MKLHELKPAEGSRKVRNRVGRGIGSGNGKTAGKGHKGQNARSGGGVRL. Residues 21–31 show a composition bias toward gly residues; the sequence is RGIGSGNGKTA.

The protein belongs to the universal ribosomal protein uL15 family. As to quaternary structure, part of the 50S ribosomal subunit.

In terms of biological role, binds to the 23S rRNA. The protein is Large ribosomal subunit protein uL15 of Bacillus cytotoxicus (strain DSM 22905 / CIP 110041 / 391-98 / NVH 391-98).